The following is a 420-amino-acid chain: Deoxyribodipyrimidine photo-lyase (420 aa).

A Photolyase/cryptochrome alpha/beta domain is found at 2–124; the sequence is GPLLVWHRGD…PLHLLPAPHL (123 aa). The disordered stretch occupies residues 152–175; that stretch reads APEALPKGPEEGEIPREDPGLPLP. Over residues 159–170 the composition is skewed to basic and acidic residues; that stretch reads GPEEGEIPREDP. Y197 is an FAD binding site. Residue R201 participates in DNA binding. FAD is bound at residue 209-213; it reads GSRLS. Interaction with DNA regions lie at residues 244–251 and 310–311; these read ELLWRDFS and NR. 341-343 is an FAD binding site; the sequence is DGD. Q373 contributes to the DNA binding site.

Belongs to the DNA photolyase class-1 family. As to quaternary structure, monomer. FAD serves as cofactor.

The catalysed reaction is cyclobutadipyrimidine (in DNA) = 2 pyrimidine residues (in DNA).. Involved in repair of UV radiation-induced DNA damage. Catalyzes the light-dependent monomerization (300-600 nm) of cyclobutyl pyrimidine dimers (in cis-syn configuration), which are formed between adjacent bases on the same DNA strand upon exposure to ultraviolet radiation. The chain is Deoxyribodipyrimidine photo-lyase (phr) from Thermus thermophilus (strain ATCC BAA-163 / DSM 7039 / HB27).